The following is an 89-amino-acid chain: Large ribosomal subunit protein eL34 (89 aa).

The disordered stretch occupies residues 1–22; it reads MPAPRYKSGSSKKVYRKAPGNS.

The protein belongs to the eukaryotic ribosomal protein eL34 family.

The sequence is that of Large ribosomal subunit protein eL34 from Methanococcus maripaludis (strain DSM 14266 / JCM 13030 / NBRC 101832 / S2 / LL).